The chain runs to 93 residues: YcgL domain-containing protein VFMJ11_1829 (93 aa).

The YcgL domain maps to 1 to 84 (MFCSIYKSTK…PPENLLEKYK (84 aa)).

The protein is YcgL domain-containing protein VFMJ11_1829 of Aliivibrio fischeri (strain MJ11) (Vibrio fischeri).